The primary structure comprises 81 residues: Small ribosomal subunit protein eS21 (81 aa).

The protein belongs to the eukaryotic ribosomal protein eS21 family. In terms of assembly, component of the 40S small ribosomal subunit.

Its subcellular location is the cytoplasm. The protein resides in the cytosol. It localises to the rough endoplasmic reticulum. Component of the small ribosomal subunit. The ribosome is a large ribonucleoprotein complex responsible for the synthesis of proteins in the cell. The sequence is that of Small ribosomal subunit protein eS21 (rps21) from Danio rerio (Zebrafish).